We begin with the raw amino-acid sequence, 334 residues long: tRNA dimethylallyltransferase (334 aa).

23-30 (GPTGAGKT) is a binding site for ATP. Substrate is bound at residue 25–30 (TGAGKT). 2 interaction with substrate tRNA regions span residues 53–56 (DSAL) and 177–181 (QRVQR).

The protein belongs to the IPP transferase family. In terms of assembly, monomer. The cofactor is Mg(2+).

It carries out the reaction adenosine(37) in tRNA + dimethylallyl diphosphate = N(6)-dimethylallyladenosine(37) in tRNA + diphosphate. In terms of biological role, catalyzes the transfer of a dimethylallyl group onto the adenine at position 37 in tRNAs that read codons beginning with uridine, leading to the formation of N6-(dimethylallyl)adenosine (i(6)A). In Polynucleobacter necessarius subsp. necessarius (strain STIR1), this protein is tRNA dimethylallyltransferase.